We begin with the raw amino-acid sequence, 439 residues long: GTPase Der (439 aa).

2 EngA-type G domains span residues 4 to 169 and 177 to 352; these read AMVS…PQEE and IKIA…EEYN. GTP contacts are provided by residues 10–17, 57–61, 120–123, 183–190, 230–234, and 295–298; these read GRPNVGKS, DTGGL, NKVD, GKPNVGKS, DTAGI, and NKWD. Residues 353–437 enclose the KH-like domain; sequence KRITTGLLNN…PIVISTKKRG (85 aa).

This sequence belongs to the TRAFAC class TrmE-Era-EngA-EngB-Septin-like GTPase superfamily. EngA (Der) GTPase family. Associates with the 50S ribosomal subunit.

Its function is as follows. GTPase that plays an essential role in the late steps of ribosome biogenesis. The sequence is that of GTPase Der from Thermoanaerobacter sp. (strain X514).